The sequence spans 408 residues: tRNA-specific 2-thiouridylase MnmA (408 aa).

Residues 27 to 34 and L53 each bind ATP; that span reads AMSGGVDS. Residue C121 is the Nucleophile of the active site. Residues C121 and C222 are joined by a disulfide bond. An ATP-binding site is contributed by G145. The interval 172–174 is interaction with tRNA; that stretch reads RDQ. C222 acts as the Cysteine persulfide intermediate in catalysis.

The protein belongs to the MnmA/TRMU family.

Its subcellular location is the cytoplasm. It carries out the reaction S-sulfanyl-L-cysteinyl-[protein] + uridine(34) in tRNA + AH2 + ATP = 2-thiouridine(34) in tRNA + L-cysteinyl-[protein] + A + AMP + diphosphate + H(+). In terms of biological role, catalyzes the 2-thiolation of uridine at the wobble position (U34) of tRNA, leading to the formation of s(2)U34. The sequence is that of tRNA-specific 2-thiouridylase MnmA from Rhizobium johnstonii (strain DSM 114642 / LMG 32736 / 3841) (Rhizobium leguminosarum bv. viciae).